The chain runs to 145 residues: MDWDYYTLLKTSVAIIIVFVVAKLITSSKSKKKTSVVPLPPVLQAWPPFIGSLIRFMKGPIVLLREEYPKLGSVFTVKLLHKNITFLIGPEVSSHFFNAYESELSQKEIYKFNVPTFGPGVVFDVDYPVRMEQFRFFSSALKVNN.

A helical transmembrane segment spans residues 5–25 (YYTLLKTSVAIIIVFVVAKLI).

It belongs to the cytochrome P450 family. In terms of tissue distribution, expressed specifically in roots.

The protein resides in the membrane. This Arabidopsis thaliana (Mouse-ear cress) protein is Putative sterol 14-demethylase-like protein (CYP51G2).